A 149-amino-acid chain; its full sequence is Large ribosomal subunit protein bL9 (149 aa).

This sequence belongs to the bacterial ribosomal protein bL9 family.

Its function is as follows. Binds to the 23S rRNA. The protein is Large ribosomal subunit protein bL9 of Xanthomonas campestris pv. campestris (strain 8004).